The chain runs to 135 residues: L-ectoine synthase (135 aa).

Belongs to the ectoine synthase family.

The catalysed reaction is (2S)-4-acetamido-2-aminobutanoate = L-ectoine + H2O. It participates in amine and polyamine biosynthesis; ectoine biosynthesis; L-ectoine from L-aspartate 4-semialdehyde: step 3/3. Its function is as follows. Catalyzes the circularization of gamma-N-acetyl-alpha,gamma-diaminobutyric acid (ADABA) to ectoine (1,4,5,6-tetrahydro-2-methyl-4-pyrimidine carboxylic acid), which is an excellent osmoprotectant. This chain is L-ectoine synthase, found in Hyphomonas neptunium (strain ATCC 15444).